Here is a 261-residue protein sequence, read N- to C-terminus: Zinc finger protein 664 (261 aa).

9 C2H2-type zinc fingers span residues 3–25, 31–53, 59–81, 87–109, 115–137, 143–165, 171–193, 199–221, and 227–249; these read YKCP…QKIH, HKCD…WRDH, YKCD…KKIH, YKCY…MRVH, YVCS…QRVH, FKCE…QRVH, YKCY…QRVH, YRCC…QRVH, and FKCD…QRVH. Lysine 257 is covalently cross-linked (Glycyl lysine isopeptide (Lys-Gly) (interchain with G-Cter in SUMO2)).

Belongs to the krueppel C2H2-type zinc-finger protein family.

It is found in the nucleus. Functionally, may be involved in transcriptional regulation. In Homo sapiens (Human), this protein is Zinc finger protein 664.